The sequence spans 203 residues: IMP cyclohydrolase (203 aa).

It belongs to the archaeal IMP cyclohydrolase family.

It carries out the reaction IMP + H2O = 5-formamido-1-(5-phospho-D-ribosyl)imidazole-4-carboxamide. It functions in the pathway purine metabolism; IMP biosynthesis via de novo pathway; IMP from 5-formamido-1-(5-phospho-D-ribosyl)imidazole-4-carboxamide: step 1/1. Functionally, catalyzes the cyclization of 5-formylamidoimidazole-4-carboxamide ribonucleotide to IMP. This is IMP cyclohydrolase from Methanococcus aeolicus (strain ATCC BAA-1280 / DSM 17508 / OCM 812 / Nankai-3).